The chain runs to 106 residues: Large ribosomal subunit protein eL42 (106 aa).

Residues Cys-12, Cys-17, Cys-74, and Cys-77 each coordinate Zn(2+).

It belongs to the eukaryotic ribosomal protein eL42 family. In terms of assembly, component of the large ribosomal subunit. Mature ribosomes consist of a small (40S) and a large (60S) subunit. The 40S subunit contains about 32 different proteins and 1 molecule of RNA (18S). The 60S subunit contains 45 different proteins and 3 molecules of RNA (25S, 5.8S and 5S). It depends on Zn(2+) as a cofactor.

The protein resides in the cytoplasm. Component of the ribosome, a large ribonucleoprotein complex responsible for the synthesis of proteins in the cell. The small ribosomal subunit (SSU) binds messenger RNAs (mRNAs) and translates the encoded message by selecting cognate aminoacyl-transfer RNA (tRNA) molecules. The large subunit (LSU) contains the ribosomal catalytic site termed the peptidyl transferase center (PTC), which catalyzes the formation of peptide bonds, thereby polymerizing the amino acids delivered by tRNAs into a polypeptide chain. The nascent polypeptides leave the ribosome through a tunnel in the LSU and interact with protein factors that function in enzymatic processing, targeting, and the membrane insertion of nascent chains at the exit of the ribosomal tunnel. The sequence is that of Large ribosomal subunit protein eL42 (RPL44) from Candida albicans (strain SC5314 / ATCC MYA-2876) (Yeast).